A 110-amino-acid chain; its full sequence is Putative membrane protein insertion efficiency factor (110 aa).

The protein belongs to the UPF0161 family.

It is found in the cell inner membrane. In terms of biological role, could be involved in insertion of integral membrane proteins into the membrane. The chain is Putative membrane protein insertion efficiency factor from Campylobacter hominis (strain ATCC BAA-381 / DSM 21671 / CCUG 45161 / LMG 19568 / NCTC 13146 / CH001A).